Here is a 198-residue protein sequence, read N- to C-terminus: GTP cyclohydrolase-2 (198 aa).

49 to 53 (RVHSE) provides a ligand contact to GTP. Positions 54, 65, and 67 each coordinate Zn(2+). GTP contacts are provided by residues glutamine 70, 92-94 (EGR), and threonine 114. The active-site Proton acceptor is aspartate 126. The active-site Nucleophile is the arginine 128. Residues threonine 149 and lysine 154 each contribute to the GTP site.

It belongs to the GTP cyclohydrolase II family. Homodimer. The cofactor is Zn(2+).

The enzyme catalyses GTP + 4 H2O = 2,5-diamino-6-hydroxy-4-(5-phosphoribosylamino)-pyrimidine + formate + 2 phosphate + 3 H(+). It functions in the pathway cofactor biosynthesis; riboflavin biosynthesis; 5-amino-6-(D-ribitylamino)uracil from GTP: step 1/4. Its function is as follows. Catalyzes the conversion of GTP to 2,5-diamino-6-ribosylamino-4(3H)-pyrimidinone 5'-phosphate (DARP), formate and pyrophosphate. In Escherichia fergusonii (strain ATCC 35469 / DSM 13698 / CCUG 18766 / IAM 14443 / JCM 21226 / LMG 7866 / NBRC 102419 / NCTC 12128 / CDC 0568-73), this protein is GTP cyclohydrolase-2.